The sequence spans 929 residues: Ribonucleoside-diphosphate reductase large chain (929 aa).

In terms of domain architecture, ATP-cone spans 1-92 (MYVKKRDGRQ…VSNLHKQTKK (92 aa)). ATP-binding positions include 5 to 6 (KR), 11 to 17 (ERVQFDK), T53, and D57. 2 residues coordinate GDP: S202 and S217. C218 and C444 form a disulfide bridge. DTTP contacts are provided by residues 226–228 (DSI), K243, R256, and 263–264 (AG). N427 is a GDP binding site. Residue N427 is the Proton acceptor of the active site. C429 (cysteine radical intermediate) is an active-site residue. Residues E431 and 605 to 608 (TAST) each bind GDP. The Proton acceptor role is filled by E431. The tract at residues 789 to 904 (ENTSGPRPYA…RDENIYSNAP (116 aa)) is disordered. Residues 800-809 (TGVSGTSTPI) are compositionally biased toward polar residues. Basic and acidic residues predominate over residues 868-884 (VKTEDIGSPLLERKEGQ). Over residues 885–894 (NEDVDEDSQE) the composition is skewed to acidic residues.

Belongs to the ribonucleoside diphosphate reductase large chain family.

The catalysed reaction is a 2'-deoxyribonucleoside 5'-diphosphate + [thioredoxin]-disulfide + H2O = a ribonucleoside 5'-diphosphate + [thioredoxin]-dithiol. Its activity is regulated as follows. Under complex allosteric control mediated by deoxynucleoside triphosphates and ATP binding to separate specificity and activation sites on the large subunit. The type of nucleotide bound at the specificity site determines substrate preference. It seems probable that ATP makes the enzyme reduce CDP and UDP, dGTP favors ADP reduction and dTTP favors GDP reduction. Stimulated by ATP and inhibited by dATP binding to the activity site. In terms of biological role, provides the precursors necessary for DNA synthesis. Catalyzes the biosynthesis of deoxyribonucleotides from the corresponding ribonucleotides. The sequence is that of Ribonucleoside-diphosphate reductase large chain (rnr-1) from Neurospora crassa (strain ATCC 24698 / 74-OR23-1A / CBS 708.71 / DSM 1257 / FGSC 987).